We begin with the raw amino-acid sequence, 239 residues long: Proteasome subunit beta type-6 (239 aa).

Alanine 2 is subject to N-acetylalanine. A propeptide spans 2–34 (AATLVAARGTRPAPAWGPEAIAPDWENREVSTG) (removed in mature form). The active-site Nucleophile is the threonine 35. At threonine 69 the chain carries Phosphothreonine.

The protein belongs to the peptidase T1B family. The 26S proteasome consists of a 20S proteasome core and two 19S regulatory subunits. The 20S proteasome core is a barrel-shaped complex made of 28 subunits that are arranged in four stacked rings. The two outer rings are each formed by seven alpha subunits, and the two inner rings are formed by seven beta subunits. The proteolytic activity is exerted by three beta-subunits PSMB5, PSMB6 and PSMB7.

The protein resides in the cytoplasm. Its subcellular location is the nucleus. The enzyme catalyses Cleavage of peptide bonds with very broad specificity.. Component of the 20S core proteasome complex involved in the proteolytic degradation of most intracellular proteins. This complex plays numerous essential roles within the cell by associating with different regulatory particles. Associated with two 19S regulatory particles, forms the 26S proteasome and thus participates in the ATP-dependent degradation of ubiquitinated proteins. The 26S proteasome plays a key role in the maintenance of protein homeostasis by removing misfolded or damaged proteins that could impair cellular functions, and by removing proteins whose functions are no longer required. Associated with the PA200 or PA28, the 20S proteasome mediates ubiquitin-independent protein degradation. This type of proteolysis is required in several pathways including spermatogenesis (20S-PA200 complex) or generation of a subset of MHC class I-presented antigenic peptides (20S-PA28 complex). Within the 20S core complex, PSMB6 displays a peptidylglutamyl-hydrolyzing activity also termed postacidic or caspase-like activity, meaning that the peptides bond hydrolysis occurs directly after acidic residues. The polypeptide is Proteasome subunit beta type-6 (PSMB6) (Bos taurus (Bovine)).